A 143-amino-acid polypeptide reads, in one-letter code: Large ribosomal subunit protein uL15 (143 aa).

Composition is skewed to basic residues over residues 1-13 (MIRK…KMRG) and 23-38 (KKHR…GNAG). A disordered region spans residues 1 to 38 (MIRKSKKITKMRGSRTCGYGEAKKHRGAGHRGGRGNAG).

The protein belongs to the universal ribosomal protein uL15 family. As to quaternary structure, part of the 50S ribosomal subunit.

Its function is as follows. Binds to the 23S rRNA. This is Large ribosomal subunit protein uL15 from Methanococcus maripaludis (strain C6 / ATCC BAA-1332).